Consider the following 81-residue polypeptide: UPF0180 protein BLi01634/BL05144 (81 aa).

Belongs to the UPF0180 family.

The polypeptide is UPF0180 protein BLi01634/BL05144 (Bacillus licheniformis (strain ATCC 14580 / DSM 13 / JCM 2505 / CCUG 7422 / NBRC 12200 / NCIMB 9375 / NCTC 10341 / NRRL NRS-1264 / Gibson 46)).